We begin with the raw amino-acid sequence, 1464 residues long: DNA polymerase III PolC-type (1464 aa).

The Exonuclease domain maps to 426–582 (YVVFDVETTG…YDAEATGRLL (157 aa)).

The protein belongs to the DNA polymerase type-C family. PolC subfamily.

Its subcellular location is the cytoplasm. It carries out the reaction DNA(n) + a 2'-deoxyribonucleoside 5'-triphosphate = DNA(n+1) + diphosphate. In terms of biological role, required for replicative DNA synthesis. This DNA polymerase also exhibits 3' to 5' exonuclease activity. The sequence is that of DNA polymerase III PolC-type from Streptococcus thermophilus (strain ATCC BAA-491 / LMD-9).